The primary structure comprises 100 residues: Large ribosomal subunit protein uL23 (100 aa).

This sequence belongs to the universal ribosomal protein uL23 family. As to quaternary structure, part of the 50S ribosomal subunit. Contacts protein L29, and trigger factor when it is bound to the ribosome.

Functionally, one of the early assembly proteins it binds 23S rRNA. One of the proteins that surrounds the polypeptide exit tunnel on the outside of the ribosome. Forms the main docking site for trigger factor binding to the ribosome. The sequence is that of Large ribosomal subunit protein uL23 from Shewanella denitrificans (strain OS217 / ATCC BAA-1090 / DSM 15013).